Reading from the N-terminus, the 603-residue chain is Adenine deaminase (603 aa).

This sequence belongs to the metallo-dependent hydrolases superfamily. Adenine deaminase family. As to quaternary structure, homodimer. Mn(2+) serves as cofactor.

The enzyme catalyses adenine + H2O + H(+) = hypoxanthine + NH4(+). This is Adenine deaminase from Klebsiella pneumoniae subsp. pneumoniae (strain ATCC 700721 / MGH 78578).